The following is a 158-amino-acid chain: Anaerobic nitrite reductase AHB2 (158 aa).

A Globin domain is found at 5–154 (GFTEKQEALV…LALAIKTEMK (150 aa)). A Homodimerization motif is present at residues 38–42 (EIAPA). Residues Ser48, Lys62, His66, and His101 each coordinate heme b. Residues 108–120 (DPHFEVVKEALLR) carry the Homodimerization motif.

It belongs to the plant globin family. In terms of assembly, unable to dimerize. Heme b serves as cofactor. As to expression, expressed in rosette leaves but not in roots.

The protein resides in the cytoplasm. The protein localises to the nucleus. The enzyme catalyses Fe(III)-heme b-[protein] + nitric oxide + H2O = Fe(II)-heme b-[protein] + nitrite + 2 H(+). Functionally, phytoglobin that reduces nitrite to nitric oxide (NO) under anoxic conditions (e.g. during flooding or in waterlogged soil). May not function as an oxygen storage or transport protein. Has an unusually high affinity for O(2) through an hexacoordinate heme iron because of a very low dissociation constant. This chain is Anaerobic nitrite reductase AHB2, found in Arabidopsis thaliana (Mouse-ear cress).